The sequence spans 242 residues: Ribonuclease 3 (242 aa).

One can recognise an RNase III domain in the interval 14 to 142 (LRRFAARFAL…VIGALYLSTG (129 aa)). Residue E56 participates in Mg(2+) binding. D60 is a catalytic residue. Residues D128 and E131 each contribute to the Mg(2+) site. The active site involves E131. Positions 170 to 235 (NHKSALQELT…ARGAYAALRS (66 aa)) constitute a DRBM domain.

This sequence belongs to the ribonuclease III family. As to quaternary structure, homodimer. It depends on Mg(2+) as a cofactor.

The protein localises to the cytoplasm. It catalyses the reaction Endonucleolytic cleavage to 5'-phosphomonoester.. Its function is as follows. Digests double-stranded RNA. Involved in the processing of primary rRNA transcript to yield the immediate precursors to the large and small rRNAs (23S and 16S). Processes some mRNAs, and tRNAs when they are encoded in the rRNA operon. Processes pre-crRNA and tracrRNA of type II CRISPR loci if present in the organism. The polypeptide is Ribonuclease 3 (Gloeobacter violaceus (strain ATCC 29082 / PCC 7421)).